The following is a 223-amino-acid chain: Small ribosomal subunit protein uS3 (223 aa).

The KH type-2 domain maps to 39 to 107; the sequence is IRQFLRKKPS…EVWLEIAEIK (69 aa).

It belongs to the universal ribosomal protein uS3 family. In terms of assembly, part of the 30S ribosomal subunit. Forms a tight complex with proteins S10 and S14.

Functionally, binds the lower part of the 30S subunit head. Binds mRNA in the 70S ribosome, positioning it for translation. This Chlamydia pneumoniae (Chlamydophila pneumoniae) protein is Small ribosomal subunit protein uS3.